The chain runs to 197 residues: Transcription factor FapR (197 aa).

The protein belongs to the FapR family.

Its function is as follows. Transcriptional factor involved in regulation of membrane lipid biosynthesis by repressing genes involved in fatty acid and phospholipid metabolism. This is Transcription factor FapR from Bacillus cereus (strain 03BB102).